The primary structure comprises 214 residues: Auxin-binding protein ABP20 (214 aa).

The first 23 residues, 1 to 23 (MPQATMIFPILFTFFLLLSSSNA), serve as a signal peptide directing secretion. A disulfide bridge links Cys-29 with Cys-44. The 147-residue stretch at 58–204 (SGLGIAGNTS…TTFLDAAQIK (147 aa)) folds into the Cupin type-1 domain. Asn-65 is a glycosylation site (N-linked (GlcNAc...) asparagine). His-106, His-108, Glu-113, and His-152 together coordinate Mn(2+).

Belongs to the germin family. As to quaternary structure, interacts with ABP19.

It localises to the secreted. The protein localises to the extracellular space. It is found in the apoplast. The protein resides in the cell wall. Its function is as follows. Probable receptor for the plant growth-promoting hormone auxin. This Prunus persica (Peach) protein is Auxin-binding protein ABP20 (ABP20).